The primary structure comprises 336 residues: Cellodextrinase A (336 aa).

The Proton donor role is filled by E141.

Belongs to the glycosyl hydrolase 5 (cellulase A) family.

It localises to the secreted. Functionally, crystalline cellulose degradation. This chain is Cellodextrinase A (celA), found in Ruminococcus flavefaciens.